Here is a 556-residue protein sequence, read N- to C-terminus: TNF receptor-associated factor 6-A (556 aa).

The RING-type; degenerate zinc finger occupies 72–111; it reads CPICLMALREAVQTPCGHRFCKACILKSLRNAGHKCPVDN. TRAF-type zinc fingers lie at residues 148–204 and 205–261; these read RHLE…EDKS and GHEL…HNLA. The MATH domain occupies 384–533; sequence NGVFIWRIKG…NDTLLVRCSV (150 aa).

It belongs to the TNF receptor-associated factor family. A subfamily. In terms of assembly, homotrimer. Homooligomer. Interacts with tifa. As to expression, highly expressed in ovary and moderately expressed in kidney, spleen, stomach, colon and testis.

It localises to the cytoplasm. The protein resides in the cell cortex. Its subcellular location is the nucleus. It is found in the lipid droplet. It catalyses the reaction S-ubiquitinyl-[E2 ubiquitin-conjugating enzyme]-L-cysteine + [acceptor protein]-L-lysine = [E2 ubiquitin-conjugating enzyme]-L-cysteine + N(6)-ubiquitinyl-[acceptor protein]-L-lysine.. The protein operates within protein modification; protein ubiquitination. E3 ubiquitin ligase that, together with UBE2N and UBE2V1, mediates the synthesis of 'Lys-63'-linked-polyubiquitin chains conjugated to proteins, such as IKBKG, IRAK1, AKT1 and AKT2. Also mediates ubiquitination of free/unanchored polyubiquitin chain that leads to MAP3K7 activation. The sequence is that of TNF receptor-associated factor 6-A (traf6-a) from Xenopus laevis (African clawed frog).